Reading from the N-terminus, the 116-residue chain is Hydrogenase maturation factor HypA (116 aa).

His2 is a Ni(2+) binding site. Residues Cys73, Cys76, Cys89, and Cys92 each coordinate Zn(2+).

This sequence belongs to the HypA/HybF family.

Involved in the maturation of [NiFe] hydrogenases. Required for nickel insertion into the metal center of the hydrogenase. This is Hydrogenase maturation factor HypA from Chlorobium limicola (strain DSM 245 / NBRC 103803 / 6330).